Consider the following 194-residue polypeptide: Adapter protein MecA 2 (194 aa).

This sequence belongs to the MecA family. As to quaternary structure, homodimer.

In terms of biological role, enables the recognition and targeting of unfolded and aggregated proteins to the ClpC protease or to other proteins involved in proteolysis. Also involved in Spx degradation by ClpC. Acts negatively in the development of competence by binding ComK and recruiting it to the ClpCP protease. When overexpressed, inhibits sporulation. This Bacillus subtilis (strain 168) protein is Adapter protein MecA 2 (mecB).